Reading from the N-terminus, the 430-residue chain is UDP-N-acetylglucosamine 1-carboxyvinyltransferase (430 aa).

Residue 22–23 participates in phosphoenolpyruvate binding; the sequence is KN. Residue Arg-102 participates in UDP-N-acetyl-alpha-D-glucosamine binding. Cys-126 acts as the Proton donor in catalysis. A 2-(S-cysteinyl)pyruvic acid O-phosphothioketal modification is found at Cys-126. Residues 131 to 135, 172 to 175, Asp-317, and Ile-339 each bind UDP-N-acetyl-alpha-D-glucosamine; these read RPVDL and KVSV.

It belongs to the EPSP synthase family. MurA subfamily.

It localises to the cytoplasm. It carries out the reaction phosphoenolpyruvate + UDP-N-acetyl-alpha-D-glucosamine = UDP-N-acetyl-3-O-(1-carboxyvinyl)-alpha-D-glucosamine + phosphate. It functions in the pathway cell wall biogenesis; peptidoglycan biosynthesis. In terms of biological role, cell wall formation. Adds enolpyruvyl to UDP-N-acetylglucosamine. The protein is UDP-N-acetylglucosamine 1-carboxyvinyltransferase of Rhizobium meliloti (strain 1021) (Ensifer meliloti).